The following is a 270-amino-acid chain: Large ribosomal subunit protein uL10 (270 aa).

Residues valine 234–aspartate 270 form a disordered region. Basic and acidic residues predominate over residues glutamate 238–arginine 250. Residues aspartate 257–aspartate 270 are compositionally biased toward acidic residues.

This sequence belongs to the universal ribosomal protein uL10 family. In terms of assembly, associates with the pre-60S ribosomal particle.

The protein resides in the nucleus. It localises to the nucleolus. Its subcellular location is the cytoplasm. Functionally, component of the ribosome assembly machinery. Nuclear paralog of the ribosomal protein P0, it binds pre-60S subunits at an early stage of assembly in the nucleolus, and is replaced by P0 in cytoplasmic pre-60S subunits and mature 80S ribosomes. The sequence is that of Large ribosomal subunit protein uL10 from Chaetomium thermophilum (strain DSM 1495 / CBS 144.50 / IMI 039719) (Thermochaetoides thermophila).